Consider the following 502-residue polypeptide: Cytochrome P450 71B10 (502 aa).

Residues 1 to 21 (MTVLWFVSLILLISILLVAVK) form a helical membrane-spanning segment. A heme-binding site is contributed by Cys443.

This sequence belongs to the cytochrome P450 family. Heme serves as cofactor.

The protein resides in the membrane. The protein is Cytochrome P450 71B10 (CYP71B10) of Arabidopsis thaliana (Mouse-ear cress).